The following is a 267-amino-acid chain: Chorismate mutase (267 aa).

The region spanning leucine 7 to lysine 262 is the Chorismate mutase domain. L-tyrosine contacts are provided by arginine 77, arginine 78, asparagine 145, glycine 147, serine 148, and threonine 151. Asparagine 145, glycine 147, and serine 148 together coordinate L-tryptophan.

As to quaternary structure, homodimer.

It is found in the cytoplasm. It catalyses the reaction chorismate = prephenate. It functions in the pathway metabolic intermediate biosynthesis; prephenate biosynthesis; prephenate from chorismate: step 1/1. Its activity is regulated as follows. Each dimer has two allosteric binding sites that can bind the regulatory effectors tryptophan or tyrosine. Can bind either one tryptophan or one tyrosine, two tryptophan or two tyrosine or one tryptophan and one tyrosine, which differentially affect the catalytic activity. Activated by tryptophan and subject to feedback inhibition by tyrosine. In the presence of both tryptophan and tyrosine, the enzyme is in the activated state. In terms of biological role, catalyzes the Claisen rearrangement of chorismate to prephenate. Acts at the first branch point in the aromatic amino acid pathway where it steers biosynthesis towards phenylalanine and tyrosine, and away from tryptophan. This is Chorismate mutase from Emericella nidulans (strain FGSC A4 / ATCC 38163 / CBS 112.46 / NRRL 194 / M139) (Aspergillus nidulans).